A 358-amino-acid chain; its full sequence is Neutral protease 2 homolog PABG_02362 (358 aa).

The first 19 residues, 1-19 (MRRVSGILAVAAFTISAFA), serve as a signal peptide directing secretion. A propeptide spanning residues 20–182 (GVIQPVAKDA…FAAMNQFVKI (163 aa)) is cleaved from the precursor. 2 cysteine pairs are disulfide-bonded: cysteine 188-cysteine 259 and cysteine 266-cysteine 284. Residue asparagine 249 is glycosylated (N-linked (GlcNAc...) asparagine). A Zn(2+)-binding site is contributed by histidine 309. Glutamate 310 is an active-site residue. Histidine 313 and aspartate 324 together coordinate Zn(2+).

The protein belongs to the peptidase M35 family. Requires Zn(2+) as cofactor.

Its subcellular location is the secreted. It catalyses the reaction Preferential cleavage of bonds with hydrophobic residues in P1'. Also 3-Asn-|-Gln-4 and 8-Gly-|-Ser-9 bonds in insulin B chain.. Its function is as follows. Secreted metalloproteinase that allows assimilation of proteinaceous substrates. Shows high activities on basic nuclear substrates such as histone and protamine. The chain is Neutral protease 2 homolog PABG_02362 from Paracoccidioides brasiliensis (strain Pb03).